A 274-amino-acid polypeptide reads, in one-letter code: Pantothenate synthetase (274 aa).

27-34 (MGALHQGH) provides a ligand contact to ATP. Histidine 34 acts as the Proton donor in catalysis. Glutamine 58 contacts (R)-pantoate. Beta-alanine is bound at residue glutamine 58. 144 to 147 (GKKD) contacts ATP. A (R)-pantoate-binding site is contributed by glutamine 150. Residues isoleucine 173 and 181-184 (LSSR) contribute to the ATP site.

It belongs to the pantothenate synthetase family. Homodimer.

The protein resides in the cytoplasm. It catalyses the reaction (R)-pantoate + beta-alanine + ATP = (R)-pantothenate + AMP + diphosphate + H(+). The protein operates within cofactor biosynthesis; (R)-pantothenate biosynthesis; (R)-pantothenate from (R)-pantoate and beta-alanine: step 1/1. Functionally, catalyzes the condensation of pantoate with beta-alanine in an ATP-dependent reaction via a pantoyl-adenylate intermediate. The protein is Pantothenate synthetase of Sulfurovum sp. (strain NBC37-1).